We begin with the raw amino-acid sequence, 163 residues long: Ribosome maturation factor RimP (163 aa).

This sequence belongs to the RimP family.

The protein localises to the cytoplasm. Functionally, required for maturation of 30S ribosomal subunits. The chain is Ribosome maturation factor RimP from Streptococcus mutans serotype c (strain ATCC 700610 / UA159).